We begin with the raw amino-acid sequence, 106 residues long: Cuticle protein CP14.6 (106 aa).

The first 16 residues, 1–16 (MKSFFVVALLVAAAAA), serve as a signal peptide directing secretion. The 70-residue stretch at 37 to 106 (PQHYSYSVET…PQGAHLPVAA (70 aa)) folds into the Chitin-binding type R&amp;R domain.

In terms of biological role, component of the cuticle of tobacco hornworm. In Manduca sexta (Tobacco hawkmoth), this protein is Cuticle protein CP14.6 (CP14.6).